The chain runs to 110 residues: Large ribosomal subunit protein uL24 (110 aa).

The protein belongs to the universal ribosomal protein uL24 family. In terms of assembly, part of the 50S ribosomal subunit.

Functionally, one of two assembly initiator proteins, it binds directly to the 5'-end of the 23S rRNA, where it nucleates assembly of the 50S subunit. In terms of biological role, one of the proteins that surrounds the polypeptide exit tunnel on the outside of the subunit. This Frankia alni (strain DSM 45986 / CECT 9034 / ACN14a) protein is Large ribosomal subunit protein uL24.